We begin with the raw amino-acid sequence, 313 residues long: Porphobilinogen deaminase (313 aa).

At Cys243 the chain carries S-(dipyrrolylmethanemethyl)cysteine.

This sequence belongs to the HMBS family. In terms of assembly, monomer. Dipyrromethane serves as cofactor.

The enzyme catalyses 4 porphobilinogen + H2O = hydroxymethylbilane + 4 NH4(+). The protein operates within porphyrin-containing compound metabolism; protoporphyrin-IX biosynthesis; coproporphyrinogen-III from 5-aminolevulinate: step 2/4. Functionally, tetrapolymerization of the monopyrrole PBG into the hydroxymethylbilane pre-uroporphyrinogen in several discrete steps. The chain is Porphobilinogen deaminase from Bordetella petrii (strain ATCC BAA-461 / DSM 12804 / CCUG 43448).